The following is a 375-amino-acid chain: Erythronate-4-phosphate dehydrogenase (375 aa).

Substrate-binding residues include Ser-45 and Thr-66. NAD(+) contacts are provided by residues Asp-146, Thr-175, 206–208 (ASR), and Asp-232. The active site involves Arg-208. Glu-237 is a catalytic residue. Catalysis depends on His-254, which acts as the Proton donor. Gly-257 is a binding site for NAD(+). Position 258 (Tyr-258) interacts with substrate.

The protein belongs to the D-isomer specific 2-hydroxyacid dehydrogenase family. PdxB subfamily. Homodimer.

It localises to the cytoplasm. The enzyme catalyses 4-phospho-D-erythronate + NAD(+) = (R)-3-hydroxy-2-oxo-4-phosphooxybutanoate + NADH + H(+). It functions in the pathway cofactor biosynthesis; pyridoxine 5'-phosphate biosynthesis; pyridoxine 5'-phosphate from D-erythrose 4-phosphate: step 2/5. Its function is as follows. Catalyzes the oxidation of erythronate-4-phosphate to 3-hydroxy-2-oxo-4-phosphonooxybutanoate. This chain is Erythronate-4-phosphate dehydrogenase, found in Photorhabdus laumondii subsp. laumondii (strain DSM 15139 / CIP 105565 / TT01) (Photorhabdus luminescens subsp. laumondii).